We begin with the raw amino-acid sequence, 518 residues long: Glutamate--cysteine ligase (518 aa).

Belongs to the glutamate--cysteine ligase type 1 family. Type 1 subfamily.

The catalysed reaction is L-cysteine + L-glutamate + ATP = gamma-L-glutamyl-L-cysteine + ADP + phosphate + H(+). Its pathway is sulfur metabolism; glutathione biosynthesis; glutathione from L-cysteine and L-glutamate: step 1/2. This Shigella dysenteriae serotype 1 (strain Sd197) protein is Glutamate--cysteine ligase.